Reading from the N-terminus, the 21-residue chain is Large ribosomal subunit protein uL30 (21 aa).

Polar residues predominate over residues 1-15 (AKTENKTVTVRQTAS). Residues 1 to 21 (AKTENKTVTVRQTASPIXXXK) form a disordered region.

The protein belongs to the universal ribosomal protein uL30 family. Part of the 50S ribosomal subunit.

This chain is Large ribosomal subunit protein uL30 (rpmD), found in Brevundimonas diminuta (Pseudomonas diminuta).